We begin with the raw amino-acid sequence, 467 residues long: Asparagine--tRNA ligase (467 aa).

Belongs to the class-II aminoacyl-tRNA synthetase family. In terms of assembly, homodimer.

The protein localises to the cytoplasm. It carries out the reaction tRNA(Asn) + L-asparagine + ATP = L-asparaginyl-tRNA(Asn) + AMP + diphosphate + H(+). The chain is Asparagine--tRNA ligase from Mannheimia succiniciproducens (strain KCTC 0769BP / MBEL55E).